Here is a 256-residue protein sequence, read N- to C-terminus: tRNA pseudouridine synthase A (256 aa).

Asp-52 acts as the Nucleophile in catalysis. Tyr-110 provides a ligand contact to substrate.

This sequence belongs to the tRNA pseudouridine synthase TruA family. In terms of assembly, homodimer.

It carries out the reaction uridine(38/39/40) in tRNA = pseudouridine(38/39/40) in tRNA. Functionally, formation of pseudouridine at positions 38, 39 and 40 in the anticodon stem and loop of transfer RNAs. The polypeptide is tRNA pseudouridine synthase A (Stenotrophomonas maltophilia (strain R551-3)).